The sequence spans 200 residues: Putative vacuolar protein sorting-associated protein 24 homolog 2 (200 aa).

Positions 2–23 (TIKSLLSDIEREERNVHKAIKD) form a coiled coil.

The protein belongs to the SNF7 family. Component of the endosomal sorting required for transport complex III (ESCRT-III), composed at least of VPS2, VPS20, VPS24 and VPS32.

The protein resides in the endosome. In terms of biological role, component of the ESCRT-III complex, which is required for multivesicular bodies (MVBs) formation and sorting of endosomal cargo proteins into MVBs. The ESCRT-III complex is probably involved in the concentration of MVB cargo. The sequence is that of Putative vacuolar protein sorting-associated protein 24 homolog 2 (VPS24-2) from Arabidopsis thaliana (Mouse-ear cress).